The primary structure comprises 412 residues: Vacuolar calcium ion transporter (412 aa).

The Cytoplasmic segment spans residues 1 to 55; the sequence is MIERLKIAKNRLEAMNSFNFPAQDRHERAPLLGSEYDHSMARQLSLLNVVGMTKS. Residues 56-76 traverse the membrane as a helical segment; sequence VLMSSYFNLMLVFVPIGLIAG. Residues 77-83 lie on the Lumenal side of the membrane; the sequence is WFEWNAK. Residues 84 to 104 traverse the membrane as a helical segment; that stretch reads SVFILNMLAIIPLASLLSFAT. The Cytoplasmic segment spans residues 105 to 114; the sequence is EQLSIISGPT. Residues 115 to 135 form a helical membrane-spanning segment; the sequence is LGALLNASFGNAIELIVGVLA. Over 136–148 the chain is Lumenal; it reads LKRGELRIVQSSL. Residues 149–169 form a helical membrane-spanning segment; it reads LGSILSNLLLVFGMCLVTTGI. The Cytoplasmic portion of the chain corresponds to 170–177; that stretch reads RREITTFN. The chain crosses the membrane as a helical span at residues 178–198; sequence ITVAQTMIAMLALSTATILIP. At 199–215 the chain is on the lumenal side; sequence ATFHYSLPDNANSENAL. The chain crosses the membrane as a helical span at residues 216–236; that stretch reads LHVSRGTAVIVLIVYVLLLVF. The Cytoplasmic segment spans residues 237 to 264; it reads QLKTHKHVCHDPSEVEEETEPRILGLRS. The helical transmembrane segment at 265-285 threads the bilayer; the sequence is SIAMLAIVTVFVSLCADYLVG. At 286 to 299 the chain is on the lumenal side; the sequence is SIDQLVEEVNISKT. Residues 300-320 traverse the membrane as a helical segment; the sequence is FVGLVILPVVGNAAEHVTAIV. Residues 321-334 are Cytoplasmic-facing; it reads VSYRGQMDLALGVA. The helical transmembrane segment at 335 to 355 threads the bilayer; sequence IGSSIQIALFLAPFLVIVGWI. Residues 356–358 lie on the Lumenal side of the membrane; the sequence is ISQ. The helical transmembrane segment at 359–379 threads the bilayer; sequence PLTLYFESLETVILFVSVFLV. Residues 380–389 are Cytoplasmic-facing; sequence NYLIQDGATH. The helical transmembrane segment at 390–410 threads the bilayer; it reads WLEGVQLLALYAIVVLAFFYY. Over 411–412 the chain is Lumenal; that stretch reads PQ.

It belongs to the Ca(2+):cation antiporter (CaCA) (TC 2.A.19) family.

It is found in the vacuole membrane. The protein localises to the endoplasmic reticulum membrane. Its function is as follows. Has a role in promoting intracellular calcium ion sequestration via the exchange of calcium ions for hydrogen ions across the vacuolar membrane. Involved also in manganese ion homeostasis via its uptake into the vacuole. In Schizosaccharomyces pombe (strain 972 / ATCC 24843) (Fission yeast), this protein is Vacuolar calcium ion transporter (vcx1).